The following is a 122-amino-acid chain: Serum amyloid A-1 protein (122 aa).

The first 18 residues, 1 to 18, serve as a signal peptide directing secretion; the sequence is MKLLTGLVFCSLVLGVSS. The tract at residues 19 to 45 is important for amyloid formation; forms amyloid fibrils in vitro; sequence RSFFSFLGEAFDGARDMWRAYSDMREA. Positions 95–122 are cleaved as a propeptide — often cleaved during amyloidogenesis; sequence LADQAANEWGRSGKDPNHFRPAGLPEKY. Residues 98–122 form a disordered region; the sequence is QAANEWGRSGKDPNHFRPAGLPEKY. Asn101 carries the N4,N4-dimethylasparagine modification.

Belongs to the SAA family. Homohexamer; dimer of trimers. Can form amyloid fibrils after partial proteolysis; the native, undenatured protein does not form amyloid fibrils (in vitro). Apolipoprotein of the HDL complex. Binds to heparin. In terms of processing, this protein is the precursor of amyloid protein A, which is formed by the removal of approximately 24 residues from the C-terminal end. Expressed by the liver; secreted in plasma (at protein level).

The protein resides in the secreted. Its function is as follows. Major acute phase protein. This chain is Serum amyloid A-1 protein (SAA1), found in Homo sapiens (Human).